Consider the following 479-residue polypeptide: Sulfate adenylyltransferase subunit 1 (479 aa).

Positions 25–239 (KSLLRFLTCG…EVLETVDIQR (215 aa)) constitute a tr-type G domain. Positions 34–41 (GSVDDGKS) are G1. 34–41 (GSVDDGKS) contacts GTP. Positions 92–96 (GITID) are G2. The segment at 113–116 (DTPG) is G3. GTP-binding positions include 113–117 (DTPGH) and 168–171 (NKMD). Residues 168 to 171 (NKMD) are G4. The tract at residues 206 to 208 (SAL) is G5.

Belongs to the TRAFAC class translation factor GTPase superfamily. Classic translation factor GTPase family. CysN/NodQ subfamily. Heterodimer composed of CysD, the smaller subunit, and CysN.

The enzyme catalyses sulfate + ATP + H(+) = adenosine 5'-phosphosulfate + diphosphate. The protein operates within sulfur metabolism; hydrogen sulfide biosynthesis; sulfite from sulfate: step 1/3. Functionally, with CysD forms the ATP sulfurylase (ATPS) that catalyzes the adenylation of sulfate producing adenosine 5'-phosphosulfate (APS) and diphosphate, the first enzymatic step in sulfur assimilation pathway. APS synthesis involves the formation of a high-energy phosphoric-sulfuric acid anhydride bond driven by GTP hydrolysis by CysN coupled to ATP hydrolysis by CysD. This chain is Sulfate adenylyltransferase subunit 1, found in Salmonella typhimurium (strain LT2 / SGSC1412 / ATCC 700720).